A 147-amino-acid chain; its full sequence is Protein LOL1 (147 aa).

The disordered stretch occupies residues 1 to 38; it reads MVASRAPRSESPWLKKPMHGVSGSTAMASTPWSSMPPS. Residues 22–38 are compositionally biased toward polar residues; the sequence is SGSTAMASTPWSSMPPS. Residues 47–77 form a putative zinc finger region; sequence QLVCSGCRNLLMYPAGATSICCAVCGTVTAV.

The protein resides in the nucleus. Functionally, putative zinc finger that may be involved in programmed cell death and defense response. In Oryza sativa subsp. japonica (Rice), this protein is Protein LOL1 (LOL1).